The chain runs to 81 residues: Putative CNGA1-overlapping antisense gene protein (81 aa).

Expressed in brain, notably in regions involved in long-term potentiation and long-term depression, such as hippocampal CA1 and CA3, dentate gyrus and cerebellar Purkinje layer.

This chain is Putative CNGA1-overlapping antisense gene protein, found in Homo sapiens (Human).